Consider the following 67-residue polypeptide: Large ribosomal subunit protein bL35 (67 aa).

Belongs to the bacterial ribosomal protein bL35 family.

The protein is Large ribosomal subunit protein bL35 of Picosynechococcus sp. (strain ATCC 27264 / PCC 7002 / PR-6) (Agmenellum quadruplicatum).